Reading from the N-terminus, the 350-residue chain is Nuclear pore complex-interacting protein family member A3 (350 aa).

Residues 306 to 325 (KTPPECLLTPLPPSAPPSVD) form a disordered region.

Belongs to the NPIP family.

This Homo sapiens (Human) protein is Nuclear pore complex-interacting protein family member A3 (NPIPA3).